Here is a 98-residue protein sequence, read N- to C-terminus: NADH-ubiquinone oxidoreductase chain 4L (98 aa).

3 consecutive transmembrane segments (helical) span residues 1-21 (MTLI…GLLM), 29-49 (ALLC…LTIL), and 61-81 (IILL…LVMV).

This sequence belongs to the complex I subunit 4L family. Core subunit of respiratory chain NADH dehydrogenase (Complex I) which is composed of 45 different subunits.

It is found in the mitochondrion inner membrane. It carries out the reaction a ubiquinone + NADH + 5 H(+)(in) = a ubiquinol + NAD(+) + 4 H(+)(out). In terms of biological role, core subunit of the mitochondrial membrane respiratory chain NADH dehydrogenase (Complex I) which catalyzes electron transfer from NADH through the respiratory chain, using ubiquinone as an electron acceptor. Part of the enzyme membrane arm which is embedded in the lipid bilayer and involved in proton translocation. The protein is NADH-ubiquinone oxidoreductase chain 4L (MT-ND4L) of Balaenoptera bonaerensis (Antarctic minke whale).